The primary structure comprises 278 residues: S-formylglutathione hydrolase YeiG (278 aa).

Active-site charge relay system residues include Ser145, Asp223, and His256.

It belongs to the esterase D family.

It catalyses the reaction S-formylglutathione + H2O = formate + glutathione + H(+). In terms of biological role, serine hydrolase involved in the detoxification of formaldehyde. Hydrolyzes S-formylglutathione to glutathione and formate. The sequence is that of S-formylglutathione hydrolase YeiG (yeiG) from Escherichia coli (strain UTI89 / UPEC).